We begin with the raw amino-acid sequence, 306 residues long: Polyisoprenyl-teichoic acid--peptidoglycan teichoic acid transferase TagU (306 aa).

The Cytoplasmic segment spans residues 1 to 11 (MRNERRKKKKT). The chain crosses the membrane as a helical; Signal-anchor for type II membrane protein span at residues 12-32 (LLLTILTIIGLLVLGTGGYAY). The Extracellular segment spans residues 33 to 306 (YLWHKAASTV…TKELKESLEK (274 aa)).

This sequence belongs to the LytR/CpsA/Psr (LCP) family. As to quaternary structure, interacts with MreB. Interacts with FloT.

It localises to the cell membrane. The protein resides in the membrane raft. The protein operates within cell wall biogenesis. May catalyze the final step in cell wall teichoic acid biosynthesis, the transfer of the anionic cell wall polymers (APs) from their lipid-linked precursor to the cell wall peptidoglycan (PG). The sequence is that of Polyisoprenyl-teichoic acid--peptidoglycan teichoic acid transferase TagU from Bacillus subtilis (strain 168).